Here is a 268-residue protein sequence, read N- to C-terminus: Formamidopyrimidine-DNA glycosylase (268 aa).

The Schiff-base intermediate with DNA role is filled by Pro-2. Glu-3 acts as the Proton donor in catalysis. Lys-56 acts as the Proton donor; for beta-elimination activity in catalysis. Residues His-91, Arg-110, and Arg-149 each coordinate DNA. The FPG-type zinc-finger motif lies at 234–268; that stretch reads QVYGRFNQACPNCGQPLKRSRIGGRSSHYCEKCQQ. The active-site Proton donor; for delta-elimination activity is Arg-258.

Belongs to the FPG family. Monomer. Zn(2+) serves as cofactor.

It carries out the reaction Hydrolysis of DNA containing ring-opened 7-methylguanine residues, releasing 2,6-diamino-4-hydroxy-5-(N-methyl)formamidopyrimidine.. The enzyme catalyses 2'-deoxyribonucleotide-(2'-deoxyribose 5'-phosphate)-2'-deoxyribonucleotide-DNA = a 3'-end 2'-deoxyribonucleotide-(2,3-dehydro-2,3-deoxyribose 5'-phosphate)-DNA + a 5'-end 5'-phospho-2'-deoxyribonucleoside-DNA + H(+). Its function is as follows. Involved in base excision repair of DNA damaged by oxidation or by mutagenic agents. Acts as a DNA glycosylase that recognizes and removes damaged bases. Has a preference for oxidized purines, such as 7,8-dihydro-8-oxoguanine (8-oxoG). Has AP (apurinic/apyrimidinic) lyase activity and introduces nicks in the DNA strand. Cleaves the DNA backbone by beta-delta elimination to generate a single-strand break at the site of the removed base with both 3'- and 5'-phosphates. The polypeptide is Formamidopyrimidine-DNA glycosylase (Syntrophomonas wolfei subsp. wolfei (strain DSM 2245B / Goettingen)).